The following is a 227-amino-acid chain: 2,3-bisphosphoglycerate-dependent phosphoglycerate mutase (227 aa).

Residues 8-15 (RHGKSVWN), 21-22 (TG), R58, 110-113 (ERMY), K121, 137-138 (RR), and 181-182 (GN) each bind substrate. The active-site Tele-phosphohistidine intermediate is H9. The active-site Proton donor/acceptor is the E110.

This sequence belongs to the phosphoglycerate mutase family. BPG-dependent PGAM subfamily.

It carries out the reaction (2R)-2-phosphoglycerate = (2R)-3-phosphoglycerate. The protein operates within carbohydrate degradation; glycolysis; pyruvate from D-glyceraldehyde 3-phosphate: step 3/5. Catalyzes the interconversion of 2-phosphoglycerate and 3-phosphoglycerate. The protein is 2,3-bisphosphoglycerate-dependent phosphoglycerate mutase of Chlamydia felis (strain Fe/C-56) (Chlamydophila felis).